The sequence spans 257 residues: RLA class II histocompatibility antigen, DP beta chain (257 aa).

The N-terminal stretch at 1 to 29 (MRPCRSLRTAALAVVLTVLLHPVALGRAT) is a signal peptide. The tract at residues 30 to 120 (PGESEQNYLW…LFQGLPVLLQ (91 aa)) is beta-1. Over 30 to 224 (PGESEQNYLW…KAQSDSARSK (195 aa)) the chain is Extracellular. 2 disulfide bridges follow: Cys-45–Cys-105 and Cys-143–Cys-199. The N-linked (GlcNAc...) asparagine glycan is linked to Asn-49. The tract at residues 121 to 214 (TQPRVSVSPS…SLDSPITVEW (94 aa)) is beta-2. The 89-residue stretch at 123 to 211 (PRVSVSPSKK…EHPSLDSPIT (89 aa)) folds into the Ig-like C1-type domain. The interval 215-224 (KAQSDSARSK) is connecting peptide. A helical membrane pass occupies residues 225 to 245 (MLAGVGGLVLGLVSLAVGVFM). Residues 246–257 (HRRSKKAQQGCR) lie on the Cytoplasmic side of the membrane.

Belongs to the MHC class II family.

The protein localises to the membrane. This Oryctolagus cuniculus (Rabbit) protein is RLA class II histocompatibility antigen, DP beta chain.